We begin with the raw amino-acid sequence, 404 residues long: Sulfate adenylyltransferase (404 aa).

The protein belongs to the sulfate adenylyltransferase family.

The enzyme catalyses sulfate + ATP + H(+) = adenosine 5'-phosphosulfate + diphosphate. It functions in the pathway sulfur metabolism; hydrogen sulfide biosynthesis; sulfite from sulfate: step 1/3. The protein is Sulfate adenylyltransferase of Chlorobaculum tepidum (strain ATCC 49652 / DSM 12025 / NBRC 103806 / TLS) (Chlorobium tepidum).